Reading from the N-terminus, the 233-residue chain is MILIASPFSLAHLEYLHTWHVTIKNIAQQHGLDIKVAIVVSTSHLNTFLPISTALNIECITFPGCGIKEIDLLWARIKLFQHYCAIGARLLWLVSADIRPPVSTWPAIADSLKKGADAVVIPYPSRWNNLIPTVIKEIVVHQKKCLVAVDARHLDTDTQIVGAGMGCIVLTLKALMVRLSIGKQPIKILWPDLHGTAEGIPLEGVEVGWFLNAYAHKLNIRCLGAEHIAQHFI.

This sequence belongs to the asfivirus H233R family.

This is an uncharacterized protein from African swine fever virus (isolate Warthog/Namibia/Wart80/1980) (ASFV).